The chain runs to 103 residues: MYAIFQSGGKQHRVSEGQVVRLEKLELATGEKVEFDSVLMVVNGEDIKIGAPVVAGAKVMAEVVAQGRGDKIKIVKFRRRKHSRKQQGHRQWFTEVKITGIQA.

Belongs to the bacterial ribosomal protein bL21 family. Part of the 50S ribosomal subunit. Contacts protein L20.

Functionally, this protein binds to 23S rRNA in the presence of protein L20. This is Large ribosomal subunit protein bL21 from Haemophilus ducreyi (strain 35000HP / ATCC 700724).